A 224-amino-acid chain; its full sequence is BOS complex subunit TMEM147 (224 aa).

A helical transmembrane segment spans residues 1–21 (MTLFHFGNCFALAYFPYFITY). The Cytoplasmic portion of the chain corresponds to 22 to 34 (KCSGLSEYNAFWK). Residues 35-58 (CVQAGVTYLFVQLCKMLFLATFFP) form a helical membrane-spanning segment. Residues 59–66 (TWEGGIYD) are Lumenal-facing. A helical membrane pass occupies residues 67 to 88 (FIGEFMKASVDVADLIGLNLVM). At 89–98 (SRNAGKGEYK) the chain is on the cytoplasmic side. A helical transmembrane segment spans residues 99-124 (IMVAALGWATAELIMSRCIPLWVGAR). Residues 125 to 129 (GIEFD) lie on the Lumenal side of the membrane. A helical transmembrane segment spans residues 130 to 155 (WKYIQMSIDSNISLVHYIVASAQVWM). Topologically, residues 156–164 (ITRYDLYHT) are cytoplasmic. A helical transmembrane segment spans residues 165–187 (FRPAVLLLMFLSVYKAFVMETFV). The Lumenal portion of the chain corresponds to 188–194 (HLCSLGS). The helical transmembrane segment at 195 to 216 (WTALLARAVVTGLLALSTLALY) threads the bilayer. At 217–224 (VAVVNVHS) the chain is on the cytoplasmic side.

Belongs to the TMEM147 family. In terms of assembly, component of the back of Sec61 (BOS) complex, composed of NCLN/Nicalin, NOMO1 and TMEM147. The BOS complex is part of the multi-pass translocon (MPT) complex, composed of three subcomplexes, the GEL complex (composed of RAB5IF/OPTI and TMCO1), the BOS complex (composed of NCLN/Nicalin, NOMO1 and TMEM147) and the PAT complex (composed of WDR83OS/Asterix and CCDC47). The MPT complex associates with the SEC61 complex. Interacts with CHRM3, CHRM1 and AVPR2. Interacts with LBR; promoting LBR localization to the nucleus inner membrane. Interacts with DHCR7.

The protein localises to the endoplasmic reticulum membrane. The protein resides in the nucleus membrane. It localises to the cell membrane. Its function is as follows. Component of the multi-pass translocon (MPT) complex that mediates insertion of multi-pass membrane proteins into the lipid bilayer of membranes. The MPT complex takes over after the SEC61 complex: following membrane insertion of the first few transmembrane segments of proteins by the SEC61 complex, the MPT complex occludes the lateral gate of the SEC61 complex to promote insertion of subsequent transmembrane regions. Also acts as a negative regulator of CHRM3 function, most likely by interfering with its trafficking to the cell membrane. Negatively regulates CHRM3-mediated calcium mobilization and activation of RPS6KA1/p90RSK activity. Regulates LBR localization to the nucleus inner membrane. This Canis lupus familiaris (Dog) protein is BOS complex subunit TMEM147.